The primary structure comprises 415 residues: Serine hydroxymethyltransferase (415 aa).

(6S)-5,6,7,8-tetrahydrofolate contacts are provided by residues Leu117 and 121 to 123 (GHL). At Lys226 the chain carries N6-(pyridoxal phosphate)lysine. Glu241 provides a ligand contact to (6S)-5,6,7,8-tetrahydrofolate.

This sequence belongs to the SHMT family. Homodimer. The cofactor is pyridoxal 5'-phosphate.

The protein localises to the cytoplasm. The enzyme catalyses (6R)-5,10-methylene-5,6,7,8-tetrahydrofolate + glycine + H2O = (6S)-5,6,7,8-tetrahydrofolate + L-serine. It functions in the pathway one-carbon metabolism; tetrahydrofolate interconversion. The protein operates within amino-acid biosynthesis; glycine biosynthesis; glycine from L-serine: step 1/1. Catalyzes the reversible interconversion of serine and glycine with tetrahydrofolate (THF) serving as the one-carbon carrier. This reaction serves as the major source of one-carbon groups required for the biosynthesis of purines, thymidylate, methionine, and other important biomolecules. Also exhibits THF-independent aldolase activity toward beta-hydroxyamino acids, producing glycine and aldehydes, via a retro-aldol mechanism. The polypeptide is Serine hydroxymethyltransferase (Bacillus licheniformis (strain ATCC 14580 / DSM 13 / JCM 2505 / CCUG 7422 / NBRC 12200 / NCIMB 9375 / NCTC 10341 / NRRL NRS-1264 / Gibson 46)).